A 110-amino-acid polypeptide reads, in one-letter code: Large ribosomal subunit protein uL22 (110 aa).

This sequence belongs to the universal ribosomal protein uL22 family. Part of the 50S ribosomal subunit.

This protein binds specifically to 23S rRNA; its binding is stimulated by other ribosomal proteins, e.g. L4, L17, and L20. It is important during the early stages of 50S assembly. It makes multiple contacts with different domains of the 23S rRNA in the assembled 50S subunit and ribosome. Its function is as follows. The globular domain of the protein is located near the polypeptide exit tunnel on the outside of the subunit, while an extended beta-hairpin is found that lines the wall of the exit tunnel in the center of the 70S ribosome. This chain is Large ribosomal subunit protein uL22, found in Cellvibrio japonicus (strain Ueda107) (Pseudomonas fluorescens subsp. cellulosa).